A 249-amino-acid chain; its full sequence is Tetraspanin-18 (249 aa).

Topologically, residues 1-13 (MEGDCLSCMKYLM) are cytoplasmic. The helical transmembrane segment at 14 to 34 (FVFNFFIFLGGACLLGIGIWV) threads the bilayer. The Extracellular portion of the chain corresponds to 35 to 49 (MVDPTGFREIVAANP). A helical transmembrane segment spans residues 50–70 (LLITGAYILLAMGGLLFLLGF). At 71–83 (LGCCGAVRENKCL) the chain is on the cytoplasmic side. A helical membrane pass occupies residues 84–104 (LLFFFLFILIIFLAELSAAIL). The Extracellular portion of the chain corresponds to 105 to 223 (AFIFRGNLTR…AFETYVYLAG (119 aa)). Residues Asn-111 and Asn-129 are each glycosylated (N-linked (GlcNAc...) asparagine). The helical transmembrane segment at 224-244 (ALAIGVLAIELFAMIFAMCLF) threads the bilayer. Residues 245–249 (RGIIQ) lie on the Cytoplasmic side of the membrane.

Belongs to the tetraspanin (TM4SF) family. As to quaternary structure, interacts with ORAI1; this interaction regulates ORAI1 exit from the endoplasmic (ER), and/or Golgi, and trafficking to the cell surface.

Its subcellular location is the membrane. Plays a role in the cell surface localization of ORAI1 and may participate in the regulation of Ca(2+) signaling and the VWF release in response to inflammatory stimuli. This is Tetraspanin-18 from Bos taurus (Bovine).